The primary structure comprises 349 residues: tRNA N6-adenosine threonylcarbamoyltransferase (349 aa).

Residues H115 and H119 each coordinate Fe cation. Substrate-binding positions include 137 to 141 (LASGG), D170, G183, and N281. D309 serves as a coordination point for Fe cation.

The protein belongs to the KAE1 / TsaD family. Requires Fe(2+) as cofactor.

It is found in the cytoplasm. The catalysed reaction is L-threonylcarbamoyladenylate + adenosine(37) in tRNA = N(6)-L-threonylcarbamoyladenosine(37) in tRNA + AMP + H(+). Required for the formation of a threonylcarbamoyl group on adenosine at position 37 (t(6)A37) in tRNAs that read codons beginning with adenine. Is involved in the transfer of the threonylcarbamoyl moiety of threonylcarbamoyl-AMP (TC-AMP) to the N6 group of A37, together with TsaE and TsaB. TsaD likely plays a direct catalytic role in this reaction. The protein is tRNA N6-adenosine threonylcarbamoyltransferase of Methylobacterium nodulans (strain LMG 21967 / CNCM I-2342 / ORS 2060).